Consider the following 131-residue polypeptide: QRFP-like peptide (131 aa).

Positions 1-25 are cleaved as a signal peptide; the sequence is MGVRVMRSRICVIGLLVLMLTQSEA. Positions 26–94 are excised as a propeptide; it reads YSFREKSWRT…DDGISPADKR (69 aa). Residues 48–131 form a disordered region; that stretch reads RRDGGDQAPS…RESRRSFGSD (84 aa). A compositionally biased stretch (polar residues) spans 97–106; sequence MLQQLAQQLK. Phe119 is subject to Phenylalanine amide. Residues 120-131 show a composition bias toward basic and acidic residues; sequence GKRESRRSFGSD. A propeptide spanning residues 123 to 131 is cleaved from the precursor; the sequence is ESRRSFGSD.

This sequence belongs to the RFamide neuropeptide family.

The protein resides in the secreted. Functionally, ligand for the G-protein coupled receptor QRFPR. The sequence is that of QRFP-like peptide from Branchiostoma floridae (Florida lancelet).